We begin with the raw amino-acid sequence, 311 residues long: Pyrimidine-specific ribonucleoside hydrolase RihA (311 aa).

His240 is an active-site residue.

It belongs to the IUNH family. RihA subfamily.

Its function is as follows. Hydrolyzes cytidine or uridine to ribose and cytosine or uracil, respectively. This chain is Pyrimidine-specific ribonucleoside hydrolase RihA, found in Salmonella choleraesuis (strain SC-B67).